A 182-amino-acid chain; its full sequence is Lipid A acyltransferase PagP (182 aa).

The first 21 residues, 1 to 21 (MTQYFRALAFFLLLVPATAMA), serve as a signal peptide directing secretion. C22 is lipidated: N-palmitoyl cysteine. The S-diacylglycerol cysteine moiety is linked to residue C22. Catalysis depends on residues H55, D98, and S99.

Belongs to the lipid A palmitoyltransferase family. Homodimer.

It localises to the cell outer membrane. It catalyses the reaction a lipid A + a 1,2-diacyl-sn-glycero-3-phosphocholine = a hepta-acyl lipid A + a 2-acyl-sn-glycero-3-phosphocholine. The catalysed reaction is a lipid IVA + a 1,2-diacyl-sn-glycero-3-phosphocholine = a lipid IVB + a 2-acyl-sn-glycero-3-phosphocholine. The enzyme catalyses a lipid IIA + a 1,2-diacyl-sn-glycero-3-phosphocholine = a lipid IIB + a 2-acyl-sn-glycero-3-phosphocholine. Transfers a fatty acid residue from the sn-1 position of a phospholipid to the N-linked hydroxyfatty acid chain on the proximal unit of lipid A or its precursors. The sequence is that of Lipid A acyltransferase PagP from Bordetella parapertussis (strain 12822 / ATCC BAA-587 / NCTC 13253).